The following is a 167-amino-acid chain: NADPH-dependent 7-cyano-7-deazaguanine reductase (167 aa).

Residues 1 to 24 (MTTRSQDQTRDLKVLGTGRLTSPE) are disordered. The Thioimide intermediate role is filled by cysteine 57. Aspartate 64 functions as the Proton donor in the catalytic mechanism. Substrate contacts are provided by residues 79–81 (VES) and 98–99 (ME).

This sequence belongs to the GTP cyclohydrolase I family. QueF type 1 subfamily.

Its subcellular location is the cytoplasm. The enzyme catalyses 7-aminomethyl-7-carbaguanine + 2 NADP(+) = 7-cyano-7-deazaguanine + 2 NADPH + 3 H(+). Its pathway is tRNA modification; tRNA-queuosine biosynthesis. Catalyzes the NADPH-dependent reduction of 7-cyano-7-deazaguanine (preQ0) to 7-aminomethyl-7-deazaguanine (preQ1). This is NADPH-dependent 7-cyano-7-deazaguanine reductase from Desulfovibrio desulfuricans (strain ATCC 27774 / DSM 6949 / MB).